Consider the following 300-residue polypeptide: Formyltetrahydrofolate deformylase (300 aa).

An ACT domain is found at arginine 21–glutamate 102. The active site involves aspartate 244.

This sequence belongs to the PurU family.

The enzyme catalyses (6R)-10-formyltetrahydrofolate + H2O = (6S)-5,6,7,8-tetrahydrofolate + formate + H(+). The protein operates within purine metabolism; IMP biosynthesis via de novo pathway; formate from 10-formyl-5,6,7,8-tetrahydrofolate: step 1/1. In terms of biological role, catalyzes the hydrolysis of 10-formyltetrahydrofolate (formyl-FH4) to formate and tetrahydrofolate (FH4). This is Formyltetrahydrofolate deformylase from Bacillus subtilis (strain 168).